Here is a 111-residue protein sequence, read N- to C-terminus: MMTLFTQEPSFSIKCLPTTPSKPHRSLLAARLLFLSISDFSCRCPKIKLSLKGYRFIYCVRVVPSPSSLAKAQSDRLNIGLIRRSLKLCCARDIRLELGQVLISIPLLLFL.

The protein localises to the mitochondrion. This is an uncharacterized protein from Arabidopsis thaliana (Mouse-ear cress).